The primary structure comprises 267 residues: Ribosomal RNA large subunit methyltransferase E (267 aa).

The S-adenosyl-L-methionine site is built by Gly-50, Trp-52, Asp-68, Asp-84, and Asp-109. The active-site Proton acceptor is the Lys-149. In terms of domain architecture, TRAM spans 196-255 (PLKIDDKFDVTIKKIGAKGNGIAFVEDFVVFMQDEVKKGENVRIKIVDVKPEFAFAIVIG).

It belongs to the class I-like SAM-binding methyltransferase superfamily. RNA methyltransferase RlmE family.

Its subcellular location is the cytoplasm. It catalyses the reaction uridine(2552) in 23S rRNA + S-adenosyl-L-methionine = 2'-O-methyluridine(2552) in 23S rRNA + S-adenosyl-L-homocysteine + H(+). Functionally, specifically methylates the uridine in position 2552 of 23S rRNA at the 2'-O position of the ribose in the fully assembled 50S ribosomal subunit. The polypeptide is Ribosomal RNA large subunit methyltransferase E (Methanococcoides burtonii (strain DSM 6242 / NBRC 107633 / OCM 468 / ACE-M)).